We begin with the raw amino-acid sequence, 150 residues long: MNIFLSKFINNNIDKKGRVSVPANYRAVLGKEAFNGIIAYPSIRNNCIEACGISHIEKLRQMIESLDPYSEERDAFETIIFGEAVQLSFDGEGRVILPASLMQHAGIEDQVCFVGKGVIFEIWQPQNFKDYLASAQKLAHEKRLTLRNTN.

2 SpoVT-AbrB domains span residues 8–55 and 84–127; these read FINN…GISH and AVQL…QPQN.

The protein belongs to the MraZ family. Forms oligomers.

It localises to the cytoplasm. The protein resides in the nucleoid. This is Transcriptional regulator MraZ from Rickettsia bellii (strain OSU 85-389).